A 362-amino-acid polypeptide reads, in one-letter code: L-asparaginase 2-1 (362 aa).

An N-terminal signal peptide occupies residues 1–25 (MRSLNTLLLSLFVAMSSGAPLLKIR). Asn-29 is a glycosylation site (N-linked (GlcNAc...) asparagine). In terms of domain architecture, Asparaginase/glutaminase spans 33–359 (PSIKIFGTGG…DQIRSVFSGV (327 aa)). The active-site O-isoaspartyl threonine intermediate is the Thr-43. Ser-89 lines the substrate pocket. Asn-93 carries N-linked (GlcNAc...) asparagine glycosylation. Residue 122–123 (TD) participates in substrate binding. Asn-239 carries an N-linked (GlcNAc...) asparagine glycan.

It belongs to the asparaginase 1 family.

The protein resides in the secreted. It localises to the periplasm. The enzyme catalyses L-asparagine + H2O = L-aspartate + NH4(+). In Saccharomyces cerevisiae (strain ATCC 204508 / S288c) (Baker's yeast), this protein is L-asparaginase 2-1 (ASP3-1).